We begin with the raw amino-acid sequence, 150 residues long: Small ribosomal subunit protein eS19S (150 aa).

It belongs to the eukaryotic ribosomal protein eS19 family.

This chain is Small ribosomal subunit protein eS19S (RPS19S), found in Ascaris suum (Pig roundworm).